A 202-amino-acid polypeptide reads, in one-letter code: Imidazoleglycerol-phosphate dehydratase (202 aa).

It belongs to the imidazoleglycerol-phosphate dehydratase family.

It is found in the cytoplasm. The enzyme catalyses D-erythro-1-(imidazol-4-yl)glycerol 3-phosphate = 3-(imidazol-4-yl)-2-oxopropyl phosphate + H2O. The protein operates within amino-acid biosynthesis; L-histidine biosynthesis; L-histidine from 5-phospho-alpha-D-ribose 1-diphosphate: step 6/9. The sequence is that of Imidazoleglycerol-phosphate dehydratase from Corynebacterium diphtheriae (strain ATCC 700971 / NCTC 13129 / Biotype gravis).